The sequence spans 968 residues: RNA polymerase-associated protein RapA (968 aa).

The region spanning 164–334 (DVGRRHAPRV…FARLRLLDPN (171 aa)) is the Helicase ATP-binding domain. 177–184 (DEVGLGKT) contributes to the ATP binding site. The DEAH box signature appears at 280–283 (DEAH). One can recognise a Helicase C-terminal domain in the interval 490-685 (RVEWLMGYLT…ALKAQLEQGR (196 aa)).

This sequence belongs to the SNF2/RAD54 helicase family. RapA subfamily. As to quaternary structure, interacts with the RNAP. Has a higher affinity for the core RNAP than for the holoenzyme. Its ATPase activity is stimulated by binding to RNAP.

Transcription regulator that activates transcription by stimulating RNA polymerase (RNAP) recycling in case of stress conditions such as supercoiled DNA or high salt concentrations. Probably acts by releasing the RNAP, when it is trapped or immobilized on tightly supercoiled DNA. Does not activate transcription on linear DNA. Probably not involved in DNA repair. The sequence is that of RNA polymerase-associated protein RapA from Salmonella paratyphi A (strain ATCC 9150 / SARB42).